A 633-amino-acid chain; its full sequence is MTTSLGTHYTWLLVALPLAGAAILLFGGRRTDAWGHLLGCAAALAAFGVGAMLLADMLGRDGLERAIHQQVFTWIPAGGLQVDFGLQIDQLSMCFVLLISGVGSLIHIYSVGYMAEDPDRRRFFGYLNLFLASMLLLVVADNYVLLYVGWEGVGLASYLLIGFWYHKPSAATAAKKAFVMNRVGDAGLAVGMFLTFSTFGTLSYAGVFAGVPAASRAVLTAIGLLMLLGACAKSAQVPLQAWLGDAMEGPTPVSALIHAATMVTAGVYLIVRSGPLYNLAPTAQLAVVIVGAVTLLFGAIIGCAKDDIKRALAASTISQIGYMVLAAGLGPAGYAFAIMHLLTHGFFKAGLFLGSGAVIHAMHEEQDMRRYGGLRAALPVTFATFGLAYLAIIGVPPFAGFFSKDAIIEAALGAGGIRGSLLGGAALLGAGVTAFYMTRVMLMTFFGEKRWTPGAHPHEAPAVMTWPMILLAVGSVFSGGLLAVGGTLRHWLQPVVGSHEEATHALPTWVATTLALGVVAVGIAVAYRMYGTAPIPRVAPVRVSALTAAARADLYGDAFNEEVFMRPGAQLTNAVVAVDDAGVDGSVNALATLVSQTSNRLRQMQTGFARNYALSMLVGAVLVAAALLVVQLW.

14 consecutive transmembrane segments (helical) span residues 8-28 (HYTW…LFGG), 34-54 (WGHL…AMLL), 95-115 (FVLL…GYMA), 123-143 (FFGY…ADNY), 188-208 (LAVG…AGVF), 209-229 (AGVP…MLLG), 251-271 (TPVS…YLIV), 284-304 (QLAV…IGCA), 322-342 (YMVL…MHLL), 382-402 (FATF…AGFF), 412-432 (LGAG…GAGV), 468-488 (MILL…GGTL), 505-525 (ALPT…GIAV), and 613-633 (ALSM…VQLW).

Belongs to the complex I subunit 5 family.

The protein localises to the cell membrane. The enzyme catalyses a quinone + NADH + 5 H(+)(in) = a quinol + NAD(+) + 4 H(+)(out). Functionally, NDH-1 shuttles electrons from NADH, via FMN and iron-sulfur (Fe-S) centers, to quinones in the respiratory chain. The immediate electron acceptor for the enzyme in this species is believed to be menaquinone. Couples the redox reaction to proton translocation (for every two electrons transferred, four hydrogen ions are translocated across the cytoplasmic membrane), and thus conserves the redox energy in a proton gradient. The polypeptide is NADH-quinone oxidoreductase subunit L (nuoL) (Mycobacterium tuberculosis (strain CDC 1551 / Oshkosh)).